Consider the following 119-residue polypeptide: Ribonuclease P protein component (119 aa).

This sequence belongs to the RnpA family. Consists of a catalytic RNA component (M1 or rnpB) and a protein subunit.

It catalyses the reaction Endonucleolytic cleavage of RNA, removing 5'-extranucleotides from tRNA precursor.. Functionally, RNaseP catalyzes the removal of the 5'-leader sequence from pre-tRNA to produce the mature 5'-terminus. It can also cleave other RNA substrates such as 4.5S RNA. The protein component plays an auxiliary but essential role in vivo by binding to the 5'-leader sequence and broadening the substrate specificity of the ribozyme. The chain is Ribonuclease P protein component from Dictyoglomus turgidum (strain DSM 6724 / Z-1310).